A 741-amino-acid chain; its full sequence is Photosystem I P700 chlorophyll a apoprotein A2 1 (741 aa).

8 helical membrane-spanning segments follow: residues isoleucine 46–alanine 69, leucine 135–glutamine 158, leucine 175–isoleucine 199, isoleucine 273–tyrosine 291, leucine 334–tyrosine 357, alanine 373–valine 399, alanine 421–histidine 443, and phenylalanine 524–valine 542. The [4Fe-4S] cluster site is built by cysteine 566 and cysteine 575. A run of 2 helical transmembrane segments spans residues serine 582–tryptophan 603 and leucine 650–isoleucine 672. Histidine 661, methionine 669, and tyrosine 677 together coordinate chlorophyll a. Tryptophan 678 provides a ligand contact to phylloquinone. The chain crosses the membrane as a helical span at residues valine 714–alanine 734.

The protein belongs to the PsaA/PsaB family. As to quaternary structure, the PsaA/B heterodimer binds the P700 chlorophyll special pair and subsequent electron acceptors. PSI consists of a core antenna complex that captures photons, and an electron transfer chain that converts photonic excitation into a charge separation. The cyanobacterial PSI reaction center is composed of one copy each of PsaA,B,C,D,E,F,I,J,K,L,M and X, and forms trimeric complexes. It depends on PSI electron transfer chain: 5 chlorophyll a, 1 chlorophyll a', 2 phylloquinones and 3 4Fe-4S clusters. PSI core antenna: 90 chlorophyll a, 22 carotenoids, 3 phospholipids and 1 galactolipid. P700 is a chlorophyll a/chlorophyll a' dimer, A0 is one or more chlorophyll a, A1 is one or both phylloquinones and FX is a shared 4Fe-4S iron-sulfur center. as a cofactor.

Its subcellular location is the cellular thylakoid membrane. The enzyme catalyses reduced [plastocyanin] + hnu + oxidized [2Fe-2S]-[ferredoxin] = oxidized [plastocyanin] + reduced [2Fe-2S]-[ferredoxin]. Its function is as follows. PsaA and PsaB bind P700, the primary electron donor of photosystem I (PSI), as well as the electron acceptors A0, A1 and FX. PSI is a plastocyanin/cytochrome c6-ferredoxin oxidoreductase, converting photonic excitation into a charge separation, which transfers an electron from the donor P700 chlorophyll pair to the spectroscopically characterized acceptors A0, A1, FX, FA and FB in turn. Oxidized P700 is reduced on the lumenal side of the thylakoid membrane by plastocyanin or cytochrome c6. This is Photosystem I P700 chlorophyll a apoprotein A2 1 from Trichormus variabilis (strain ATCC 29413 / PCC 7937) (Anabaena variabilis).